The sequence spans 70 residues: Conotoxin elongated-tx3a-a (70 aa).

Positions Met1–Ala24 are cleaved as a signal peptide. Positions Asp25–Arg44 are excised as a propeptide. 3 disulfides stabilise this stretch: Cys55–Cys68, Cys56–Cys66, and Cys61–Cys69. Trp58 carries the 6'-bromotryptophan; partial modification. Cysteine amide; partial is present on Cys69.

It belongs to the conotoxin M superfamily. In terms of processing, two short peptides are produced from this precursor; Conotoxin tx3a-b is amidated at Cys-69 (but has no bromotryptophan), whereas conotoxin tx3a-a has an unmodified Gly-70 and a bromotryptophan. Two elongated peptides are also produced; Conotoxin elongated-tx3a-b is amidated at Cys-69 (but has no bromotryptophan), whereas conotoxin elongated tx3a-a has an unmodified Gly-70 (but has no bromotryptophan). Post-translationally, ju et al. (2022) describe a disulfide connectivity (C55-C61; C56-C69; C66-C68) that differs from that of Han and colleagues (2006), McDougal et al. (2008), and Ueberheide et al. (2009). Expressed by the venom duct. Is present in all duct parts with a highest content in part 2 (proximal of the venom bulb) and then decreases in concentration toward the end of the duct.

Its subcellular location is the secreted. In terms of biological role, intracranial injection into mice causes scratching and hyperactivity. In vitro, inhibits proliferation of the mice ovarian cancer cells ID8. The protein is Conotoxin elongated-tx3a-a of Conus textile (Cloth-of-gold cone).